A 97-amino-acid polypeptide reads, in one-letter code: UPF0473 protein Exig_2070 (97 aa).

This sequence belongs to the UPF0473 family.

The sequence is that of UPF0473 protein Exig_2070 from Exiguobacterium sibiricum (strain DSM 17290 / CCUG 55495 / CIP 109462 / JCM 13490 / 255-15).